Reading from the N-terminus, the 347-residue chain is Monopolin complex subunit LRS4 (347 aa).

Residues 46–118 (KKVVDETLFL…QISVDKHNKE (73 aa)) adopt a coiled-coil conformation. Over residues 112 to 130 (VDKHNKERTPSTGRDEQQR) the composition is skewed to basic and acidic residues. Disordered regions lie at residues 112 to 183 (VDKH…SLLS) and 208 to 230 (RNDT…LQKS). Polar residues-rich tracts occupy residues 131–140 (NSKAAHTSKP) and 155–172 (NNQT…PTSQ). Phosphoserine is present on residues serine 168 and serine 230.

Component of the monopolin complex composed of at least CSM1, LRS4 and MAM1. The complex associates with the kinetochore. Phosphorylated by CDC5. This phosphorylation is required for the location to the kinetochores during late pachytene.

It localises to the nucleus. The protein localises to the nucleolus. Its subcellular location is the chromosome. It is found in the centromere. Component of the monopolin complex which promotes monoorientation during meiosis I, required for chromosome segregation during meiosis. Involved in rDNA silencing. In Saccharomyces cerevisiae (strain ATCC 204508 / S288c) (Baker's yeast), this protein is Monopolin complex subunit LRS4 (LRS4).